The chain runs to 130 residues: Protein Wnt-9 (130 aa).

The O-palmitoleoyl serine; by PORCN moiety is linked to residue Ser-1. The disordered stretch occupies residues 41 to 69 (AGERTIARSRRRPREQRGQRRPKVSDGAL). The segment covering 47–62 (ARSRRRPREQRGQRRP) has biased composition (basic residues). A glycan (N-linked (GlcNAc...) asparagine) is linked at Asn-97. Cys-100 and Cys-111 are disulfide-bonded.

It belongs to the Wnt family. In terms of processing, palmitoleoylation is required for efficient binding to frizzled receptors. Depalmitoleoylation leads to Wnt signaling pathway inhibition.

Its subcellular location is the secreted. It is found in the extracellular space. The protein resides in the extracellular matrix. Ligand for members of the frizzled family of seven transmembrane receptors. Probable developmental protein. May be a signaling molecule which affects the development of discrete regions of tissues. Is likely to signal over only few cell diameters. This is Protein Wnt-9 (WNT-9) from Eptatretus stoutii (Pacific hagfish).